Here is a 238-residue protein sequence, read N- to C-terminus: MIAFIVLLSLAAVLQQSSGTVDFASESSNKRENQKQIVDKHNALRRSVRPTARNMLQMEWNSNAAQNAKRWADRCSFAHSPPHLRTVGKIGCGENLFMSSQPYAWSRVIQSWYDENKKFVYGVGANPPGSVIGHYTQIVWYNSHLLGCGAAKCSSSKYLYVCQYCPTGNIIGSIATPYKSGPPCGDCPSACVNGLCTNPCKHHNVFSNCQSLAKQNACQTEWMKSKCAASCFCRTEII.

The signal sequence occupies residues 1–19 (MIAFIVLLSLAAVLQQSSG). The SCP domain maps to 38–164 (VDKHNALRRS…SSKYLYVCQY (127 aa)). Cystine bridges form between Cys75/Cys153, Cys92/Cys165, Cys148/Cys162, Cys184/Cys191, Cys187/Cys196, Cys200/Cys233, Cys209/Cys227, and Cys218/Cys231. In terms of domain architecture, ShKT spans 200-233 (CKHHNVFSNCQSLAKQNACQTEWMKSKCAASCFC).

In terms of tissue distribution, expressed by the venom gland.

It localises to the secreted. Functionally, inhibits carbachol-induced muscle contraction and weakly blocks muscle contraction evoked by potassium. The polypeptide is Cysteine-rich venom protein natrin-2 (Naja atra (Chinese cobra)).